A 524-amino-acid polypeptide reads, in one-letter code: L-lactate permease (524 aa).

13 helical membrane passes run 12–34 (LAVS…TVFK), 38–60 (IQAA…HLPF), 67–89 (IVQG…VWLY), 127–149 (LEGA…SLGF), 156–178 (MLCL…VGII), 193–215 (SMMT…IWLM), 224–246 (ILPA…TIFI), 250–267 (LADI…ALFL), 297–319 (WSPF…KGLL), 339–361 (IEVG…VTTV), 374–396 (SLLK…IIGI), 411–433 (EAVA…IGVF), and 505–522 (YSFG…ILSL).

The protein belongs to the lactate permease family.

The protein resides in the cell membrane. Functionally, may play a role in L-lactate transport. In Halalkalibacterium halodurans (strain ATCC BAA-125 / DSM 18197 / FERM 7344 / JCM 9153 / C-125) (Bacillus halodurans), this protein is L-lactate permease (lctP).